The sequence spans 84 residues: Small ribosomal subunit protein uS17 (84 aa).

This sequence belongs to the universal ribosomal protein uS17 family. In terms of assembly, part of the 30S ribosomal subunit.

In terms of biological role, one of the primary rRNA binding proteins, it binds specifically to the 5'-end of 16S ribosomal RNA. The protein is Small ribosomal subunit protein uS17 of Vibrio parahaemolyticus serotype O3:K6 (strain RIMD 2210633).